The primary structure comprises 297 residues: Large ribosomal subunit protein uL18 (297 aa).

Lys164 is covalently cross-linked (Glycyl lysine isopeptide (Lys-Gly) (interchain with G-Cter in ubiquitin)). Phosphoserine is present on residues Ser167, Ser176, and Ser235.

Belongs to the universal ribosomal protein uL18 family. As to quaternary structure, component of the large ribosomal subunit (LSU). Mature yeast ribosomes consist of a small (40S) and a large (60S) subunit. The 40S small subunit contains 1 molecule of ribosomal RNA (18S rRNA) and 33 different proteins (encoded by 57 genes). The large 60S subunit contains 3 rRNA molecules (25S, 5.8S and 5S rRNA) and 46 different proteins (encoded by 81 genes). Component of a hexameric 5S RNP precursor complex, composed of 5S RNA, RRS1, RPF2, RPL5, RPL11A/RPL11B and SYO1; this complex acts as a precursor for ribosome assembly. RPL5/uL18 forms a heterotrimeric complex with SYO1 and RPL11A/RPL11B/uL5. Interaction of this complex with KAP104 allows the nuclear import of the heterotrimer.

Its subcellular location is the cytoplasm. It localises to the nucleus. Component of the ribosome, a large ribonucleoprotein complex responsible for the synthesis of proteins in the cell. The small ribosomal subunit (SSU) binds messenger RNAs (mRNAs) and translates the encoded message by selecting cognate aminoacyl-transfer RNA (tRNA) molecules. The large subunit (LSU) contains the ribosomal catalytic site termed the peptidyl transferase center (PTC), which catalyzes the formation of peptide bonds, thereby polymerizing the amino acids delivered by tRNAs into a polypeptide chain. The nascent polypeptides leave the ribosome through a tunnel in the LSU and interact with protein factors that function in enzymatic processing, targeting, and the membrane insertion of nascent chains at the exit of the ribosomal tunnel. The protein is Large ribosomal subunit protein uL18 of Saccharomyces cerevisiae (strain ATCC 204508 / S288c) (Baker's yeast).